The chain runs to 304 residues: Energy-coupling factor transporter ATP-binding protein EcfA2 (304 aa).

Positions 3-261 (IIVKNISYIY…EKFLVENKLK (259 aa)) constitute an ABC transporter domain. 40–47 (GSTGSGKT) is a binding site for ATP.

This sequence belongs to the ABC transporter superfamily. Energy-coupling factor EcfA family. In terms of assembly, forms a stable energy-coupling factor (ECF) transporter complex composed of 2 membrane-embedded substrate-binding proteins (S component), 2 ATP-binding proteins (A component) and 2 transmembrane proteins (T component).

It is found in the cell membrane. ATP-binding (A) component of a common energy-coupling factor (ECF) ABC-transporter complex. Unlike classic ABC transporters this ECF transporter provides the energy necessary to transport a number of different substrates. The protein is Energy-coupling factor transporter ATP-binding protein EcfA2 of Mycoplasmopsis pulmonis (strain UAB CTIP) (Mycoplasma pulmonis).